Reading from the N-terminus, the 153-residue chain is NADPH-dependent 7-cyano-7-deazaguanine reductase (153 aa).

A compositionally biased stretch (polar residues) spans 1–17 (MTDTRNLTQLGSKTQAP). The disordered stretch occupies residues 1-23 (MTDTRNLTQLGSKTQAPASPEAA). The active-site Thioimide intermediate is Cys51. Catalysis depends on Asp58, which acts as the Proton donor. Substrate-binding positions include 73–75 (VES) and 92–93 (HE).

This sequence belongs to the GTP cyclohydrolase I family. QueF type 1 subfamily.

It is found in the cytoplasm. It catalyses the reaction 7-aminomethyl-7-carbaguanine + 2 NADP(+) = 7-cyano-7-deazaguanine + 2 NADPH + 3 H(+). It participates in tRNA modification; tRNA-queuosine biosynthesis. Its function is as follows. Catalyzes the NADPH-dependent reduction of 7-cyano-7-deazaguanine (preQ0) to 7-aminomethyl-7-deazaguanine (preQ1). The chain is NADPH-dependent 7-cyano-7-deazaguanine reductase from Chelativorans sp. (strain BNC1).